Consider the following 487-residue polypeptide: Berbamunine synthase (487 aa).

Cys-429 provides a ligand contact to heme.

Belongs to the cytochrome P450 family. It depends on heme as a cofactor.

It is found in the endoplasmic reticulum membrane. The protein resides in the microsome membrane. The catalysed reaction is (R)-N-methylcoclaurine + (S)-N-methylcoclaurine + reduced [NADPH--hemoprotein reductase] + O2 = berbamunine + oxidized [NADPH--hemoprotein reductase] + 2 H2O + H(+). Its pathway is alkaloid biosynthesis; berbamunine biosynthesis; berbamunine from (R)-N-methylcoclaurine and (S)-N-methylcoclaurine: step 1/1. Forms the bisbenzylisoquinoline alkaloid berbamunine by phenol oxidation of N-methylcoclaurine without the incorporation of oxygen into the product. Oxidatively couples either two molecules of (R)-N-methylcoclaurine to form the (R,R) dimer guattegaumerine or one molecule each of (R)- and (S)-N-methylcoclaurine to form the (R,S) dimer berbamunine. This is Berbamunine synthase (CYP80A1) from Berberis stolonifera (Barberry).